The following is a 510-amino-acid chain: Dolichyl-P-Man:Man5GlcNAc2-PP-dolichol alpha-1,3-mannosyltransferase Alg3 (510 aa).

Over 1 to 43 (MAPPKAASHRPAVRRKKSGTLVDSILDKYLNVRFFKYLLLEPA) the chain is Cytoplasmic. A helical transmembrane segment spans residues 44 to 64 (ALPIVGLFVLLAELVINVVVI). The Lumenal portion of the chain corresponds to 65 to 97 (QRVPYTEIDWVAYMQECEGFLNGTTNYSLLRGD). A helical transmembrane segment spans residues 98-118 (TGPLVYPAAFVYIYSALYYVT). Residues 119–125 (SHGTNVR) are Cytoplasmic-facing. A helical membrane pass occupies residues 126-146 (LAQYIFAGIYLLQLALVLRLY). Over 147-171 (SKSRKVPPYVLVLSAFTSYRIHSIY) the chain is Lumenal. A helical transmembrane segment spans residues 172-192 (VLRLFNDPVAVLLLYAALNLF). The Cytoplasmic portion of the chain corresponds to 193–211 (LDRRWTLGSTFFSLAVGVK). Residues 212–232 (MNILLFAPALLLFYLANLGLL) traverse the membrane as a helical segment. Position 233 (R233) is a topological domain, lumenal. Residues 234–254 (TILQLAVCGVIQLLLGAPFLL) traverse the membrane as a helical segment. Residues 255-294 (THPVEYLRGSFDLGRIFEHKWTVNYRFLSRDVFENRTFHV) are Cytoplasmic-facing. A helical transmembrane segment spans residues 295–315 (SLLGLHLLLLLAFAKPIWTFF). Residues 316 to 403 (QSYVRLRRIE…YGIHFDRCTQ (88 aa)) lie on the Lumenal side of the membrane. Residues 337–358 (LQLKAQKRPKKVEKDKDKDQKK) form a disordered region. The segment covering 348-358 (VEKDKDKDQKK) has biased composition (basic and acidic residues). A helical transmembrane segment spans residues 404–424 (LALLPFFLCNLVGVACSRSLH). At 425–426 (YQ) the chain is on the cytoplasmic side. The helical transmembrane segment at 427 to 447 (FYVWYFHSLPYLAWSTPYSLG) threads the bilayer. Residues 448–464 (VRCLILGLIEYCWNTYP) are Lumenal-facing. The helical transmembrane segment at 465-485 (STNFSSAALHFTHIILLAGVA) threads the bilayer. Residues 486–510 (KQLIQTMRINNAAKREQQEQQKKLQ) lie on the Cytoplasmic side of the membrane.

Belongs to the glycosyltransferase ALG3 family.

Its subcellular location is the endoplasmic reticulum membrane. The catalysed reaction is an alpha-D-Man-(1-&gt;2)-alpha-D-Man-(1-&gt;2)-alpha-D-Man-(1-&gt;3)-[alpha-D-Man-(1-&gt;6)]-beta-D-Man-(1-&gt;4)-beta-D-GlcNAc-(1-&gt;4)-alpha-D-GlcNAc-diphospho-di-trans,poly-cis-dolichol + a di-trans,poly-cis-dolichyl beta-D-mannosyl phosphate = an alpha-D-Man-(1-&gt;2)-alpha-D-Man-(1-&gt;2)-alpha-D-Man-(1-&gt;3)-[alpha-D-Man-(1-&gt;3)-alpha-D-Man-(1-&gt;6)]-beta-D-Man-(1-&gt;4)-beta-D-GlcNAc-(1-&gt;4)-alpha-D-GlcNAc-diphospho-di-trans,poly-cis-dolichol + a di-trans,poly-cis-dolichyl phosphate + H(+). Its pathway is protein modification; protein glycosylation. Probable alpha-1,3-mannosyltransferase involved in the N-glycosylation pathway. Involved in glycosylation of the TNF receptor grnd, regulating its ligand affinity. Required for normal epithelial growth and architecture. Suppressor of JNK-dependent intestinal stem cell proliferation. The chain is Dolichyl-P-Man:Man5GlcNAc2-PP-dolichol alpha-1,3-mannosyltransferase Alg3 from Drosophila melanogaster (Fruit fly).